Consider the following 121-residue polypeptide: NAD(P)H-quinone oxidoreductase subunit 3, chloroplastic (121 aa).

The next 3 membrane-spanning stretches (helical) occupy residues 10–30, 65–85, and 90–110; these read FFIFLLLASVIPILAFSISKF, MFALVFVIFDVETVFLYPWAM, and LGLSAFIEALVFVFILIIGLV.

Belongs to the complex I subunit 3 family. In terms of assembly, NDH is composed of at least 16 different subunits, 5 of which are encoded in the nucleus.

It localises to the plastid. The protein resides in the chloroplast thylakoid membrane. The catalysed reaction is a plastoquinone + NADH + (n+1) H(+)(in) = a plastoquinol + NAD(+) + n H(+)(out). It catalyses the reaction a plastoquinone + NADPH + (n+1) H(+)(in) = a plastoquinol + NADP(+) + n H(+)(out). NDH shuttles electrons from NAD(P)H:plastoquinone, via FMN and iron-sulfur (Fe-S) centers, to quinones in the photosynthetic chain and possibly in a chloroplast respiratory chain. The immediate electron acceptor for the enzyme in this species is believed to be plastoquinone. Couples the redox reaction to proton translocation, and thus conserves the redox energy in a proton gradient. The polypeptide is NAD(P)H-quinone oxidoreductase subunit 3, chloroplastic (Physcomitrium patens (Spreading-leaved earth moss)).